We begin with the raw amino-acid sequence, 62 residues long: uncharacterized protein (62 aa).

It is found in the plastid. The protein resides in the chloroplast. This is an uncharacterized protein from Porphyra purpurea (Red seaweed).